Reading from the N-terminus, the 155-residue chain is Ribosomal RNA large subunit methyltransferase H (155 aa).

S-adenosyl-L-methionine is bound by residues L72, G103, and 122 to 127 (LSALTL).

It belongs to the RNA methyltransferase RlmH family. Homodimer.

Its subcellular location is the cytoplasm. It carries out the reaction pseudouridine(1915) in 23S rRNA + S-adenosyl-L-methionine = N(3)-methylpseudouridine(1915) in 23S rRNA + S-adenosyl-L-homocysteine + H(+). Functionally, specifically methylates the pseudouridine at position 1915 (m3Psi1915) in 23S rRNA. The polypeptide is Ribosomal RNA large subunit methyltransferase H (Salmonella choleraesuis (strain SC-B67)).